Here is a 1129-residue protein sequence, read N- to C-terminus: Inositol hexakisphosphate and diphosphoinositol-pentakisphosphate kinase 2 (1129 aa).

Phosphoserine is present on serine 44. 59–60 (KK) is a substrate binding site. The ATP site is built by arginine 140, lysine 193, histidine 200, and arginine 219. 219–220 (RK) is a substrate binding site. A Phosphoserine modification is found at serine 229. Residues 243 to 246 (EEFM) and 252 to 254 (DVK) each bind ATP. Residues lysine 254 and arginine 268 each coordinate substrate. ATP-binding positions include serine 270, aspartate 315, and 327–329 (DVN). 332-335 (SFVK) lines the substrate pocket. The segment at 377-448 (PTTSGTMMEL…VLDIARQLLM (72 aa)) is polyphosphoinositide-binding domain. The disordered stretch occupies residues 904–945 (KGCEEDKNLPSGYGYRPASRENEGRRSLKTDDDEPHTSKRDE). The segment covering 921-945 (ASRENEGRRSLKTDDDEPHTSKRDE) has biased composition (basic and acidic residues). Serine 1051, serine 1058, and serine 1066 each carry phosphoserine. The interval 1070-1129 (YTPTKILPTPPAALKSSKASSKAAAGGPSQAMAPHTSSRKKSINSKTEGHEPKKSTGKKR) is disordered. Residues 1081–1098 (AALKSSKASSKAAAGGPS) show a composition bias toward low complexity. Phosphoserine is present on residues serine 1106 and serine 1107.

This sequence belongs to the histidine acid phosphatase family. VIP1 subfamily. Ubiquitously expressed. Expressed in the cochlear and vestibular sensory hair cells, supporting cells and spiral ganglion neurons.

It localises to the cytoplasm. The protein localises to the cytosol. The catalysed reaction is 1D-myo-inositol hexakisphosphate + ATP = 1-diphospho-1D-myo-inositol 2,3,4,5,6-pentakisphosphate + ADP. The enzyme catalyses 5-diphospho-1D-myo-inositol 1,2,3,4,6-pentakisphosphate + ATP + H(+) = 1,5-bis(diphospho)-1D-myo-inositol 2,3,4,6-tetrakisphosphate + ADP. Bifunctional inositol kinase that acts in concert with the IP6K kinases IP6K1, IP6K2 and IP6K3 to synthesize the diphosphate group-containing inositol pyrophosphates diphosphoinositol pentakisphosphate, PP-InsP5, and bis-diphosphoinositol tetrakisphosphate, (PP)2-InsP4. PP-InsP5 and (PP)2-InsP4, also respectively called InsP7 and InsP8, regulate a variety of cellular processes, including apoptosis, vesicle trafficking, cytoskeletal dynamics, exocytosis, insulin signaling and neutrophil activation. Phosphorylates inositol hexakisphosphate (InsP6) at position 1 to produce PP-InsP5 which is in turn phosphorylated by IP6Ks to produce (PP)2-InsP4. Alternatively, phosphorylates PP-InsP5 at position 1, produced by IP6Ks from InsP6, to produce (PP)2-InsP4. Required for normal hearing. The polypeptide is Inositol hexakisphosphate and diphosphoinositol-pentakisphosphate kinase 2 (Mus musculus (Mouse)).